A 413-amino-acid chain; its full sequence is NAD-dependent dihydropyrimidine dehydrogenase subunit PreT (413 aa).

E287 is an NAD(+) binding site.

It belongs to the NADH dehydrogenase family. Heterotetramer of 2 PreA and 2 PreT subunits.

It catalyses the reaction 5,6-dihydrouracil + NAD(+) = uracil + NADH + H(+). The catalysed reaction is 5,6-dihydrothymine + NAD(+) = thymine + NADH + H(+). In terms of biological role, involved in pyrimidine base degradation. Catalyzes physiologically the reduction of uracil to 5,6-dihydrouracil (DHU) by using NADH as a specific cosubstrate. It also catalyzes the reverse reaction and the reduction of thymine to 5,6-dihydrothymine (DHT). This chain is NAD-dependent dihydropyrimidine dehydrogenase subunit PreT (preT), found in Salmonella typhimurium (strain LT2 / SGSC1412 / ATCC 700720).